The primary structure comprises 701 residues: Elongation factor G (701 aa).

Residues 10–290 (AKVRNIGIMA…AVVDYLPSPL (281 aa)) enclose the tr-type G domain. Residues 19–26 (AHIDAGKT), 83–87 (DTPGH), and 137–140 (NKMD) contribute to the GTP site.

It belongs to the TRAFAC class translation factor GTPase superfamily. Classic translation factor GTPase family. EF-G/EF-2 subfamily.

The protein resides in the cytoplasm. Catalyzes the GTP-dependent ribosomal translocation step during translation elongation. During this step, the ribosome changes from the pre-translocational (PRE) to the post-translocational (POST) state as the newly formed A-site-bound peptidyl-tRNA and P-site-bound deacylated tRNA move to the P and E sites, respectively. Catalyzes the coordinated movement of the two tRNA molecules, the mRNA and conformational changes in the ribosome. This Tropheryma whipplei (strain TW08/27) (Whipple's bacillus) protein is Elongation factor G.